The following is a 256-amino-acid chain: Alcohol dehydrogenase (256 aa).

12–35 contacts NAD(+); sequence FVAGLGGIGLDTSKELVKRDLKNL. Position 140 (Ser140) interacts with substrate. Tyr153 functions as the Proton acceptor in the catalytic mechanism.

It belongs to the short-chain dehydrogenases/reductases (SDR) family. As to quaternary structure, homodimer.

The catalysed reaction is a primary alcohol + NAD(+) = an aldehyde + NADH + H(+). It catalyses the reaction a secondary alcohol + NAD(+) = a ketone + NADH + H(+). The chain is Alcohol dehydrogenase (Adh) from Drosophila tsacasi (Fruit fly).